Reading from the N-terminus, the 210-residue chain is Thymidylate kinase (210 aa).

11–18 lines the ATP pocket; the sequence is GLEGAGKS.

Belongs to the thymidylate kinase family.

It catalyses the reaction dTMP + ATP = dTDP + ADP. Its function is as follows. Phosphorylation of dTMP to form dTDP in both de novo and salvage pathways of dTTP synthesis. In Vibrio campbellii (strain ATCC BAA-1116), this protein is Thymidylate kinase.